The primary structure comprises 68 residues: Large ribosomal subunit protein uL29 (68 aa).

Belongs to the universal ribosomal protein uL29 family.

The chain is Large ribosomal subunit protein uL29 from Chloroflexus aurantiacus (strain ATCC 29364 / DSM 637 / Y-400-fl).